The chain runs to 253 residues: 5-oxoprolinase subunit A (253 aa).

It belongs to the LamB/PxpA family. As to quaternary structure, forms a complex composed of PxpA, PxpB and PxpC.

The enzyme catalyses 5-oxo-L-proline + ATP + 2 H2O = L-glutamate + ADP + phosphate + H(+). Its function is as follows. Catalyzes the cleavage of 5-oxoproline to form L-glutamate coupled to the hydrolysis of ATP to ADP and inorganic phosphate. The protein is 5-oxoprolinase subunit A of Bacillus cereus (strain AH820).